Consider the following 457-residue polypeptide: Argininosuccinate lyase (457 aa).

The protein belongs to the lyase 1 family. Argininosuccinate lyase subfamily.

It localises to the cytoplasm. It catalyses the reaction 2-(N(omega)-L-arginino)succinate = fumarate + L-arginine. Its pathway is amino-acid biosynthesis; L-arginine biosynthesis; L-arginine from L-ornithine and carbamoyl phosphate: step 3/3. The polypeptide is Argininosuccinate lyase (Klebsiella pneumoniae subsp. pneumoniae (strain ATCC 700721 / MGH 78578)).